The following is a 306-amino-acid chain: Palmitoyl-protein thioesterase 1 (306 aa).

Residues 1–27 (MASPSCLWLLAVALLPWTCAARALHHL) form the signal peptide. 3 disulfide bridges follow: C45/C46, C96/C128, and C152/C160. S115 is a catalytic residue. 3 N-linked (GlcNAc...) asparagine glycosylation sites follow: N197, N212, and N232. Catalysis depends on residues D233 and H289.

This sequence belongs to the palmitoyl-protein thioesterase family. Interacts with CLN5, ATP5F1A and ATP5F1B. Post-translationally, glycosylated.

It is found in the lysosome. It localises to the secreted. The protein resides in the golgi apparatus. Its subcellular location is the endoplasmic reticulum. It carries out the reaction S-hexadecanoyl-L-cysteinyl-[protein] + H2O = L-cysteinyl-[protein] + hexadecanoate + H(+). The enzyme catalyses hexadecanoyl-CoA + H2O = hexadecanoate + CoA + H(+). It catalyses the reaction S-hexadecanoyl-N-acetylcysteamine + H2O = N-acetylcysteamine + hexadecanoate + H(+). The catalysed reaction is S-hexadecanoyl-N-acetylcysteine methyl ester + H2O = N-acetylcysteine methyl ester + hexadecanoate + H(+). With respect to regulation, palmitoylation reduces PPT1 enzymatic activity. Functionally, has thioesterase activity against fatty acid thioesters with 14 -18 carbons, including palmitoyl-CoA, S-palmitoyl-N-acetylcysteamine, and palmitoylated proteins. In contrast to PPT2, PPT1 can hydrolyze palmitoylated proteins and palmitoylcysteine. This Macaca fascicularis (Crab-eating macaque) protein is Palmitoyl-protein thioesterase 1 (PPT1).